A 154-amino-acid polypeptide reads, in one-letter code: MSKKFIITWDAMQSYCRELAEKQMPAEQWKGIWAVSRGGLVPGAILARELGIRHVDTICISSYDHDHQRDMTVVKAPEGDGEGFLIVEDLVDSGDTARKLREMYPKAKLIAVCAKPAGVELLDDYVVDIAQDTWIEQPWDMSIQFVEPVNRKQK.

Residues 37–38 (RG), arginine 69, and 88–96 (EDLVDSGDT) each bind 5-phospho-alpha-D-ribose 1-diphosphate. Arginine 69 serves as a coordination point for GMP. Residue aspartate 89 coordinates Mg(2+). 2 residues coordinate guanine: aspartate 92 and isoleucine 135. The xanthine site is built by aspartate 92 and isoleucine 135. Residues 92–96 (DSGDT) and 134–135 (WI) each bind GMP.

This sequence belongs to the purine/pyrimidine phosphoribosyltransferase family. XGPT subfamily. As to quaternary structure, homotetramer. Mg(2+) serves as cofactor.

The protein localises to the cell inner membrane. The enzyme catalyses GMP + diphosphate = guanine + 5-phospho-alpha-D-ribose 1-diphosphate. The catalysed reaction is XMP + diphosphate = xanthine + 5-phospho-alpha-D-ribose 1-diphosphate. It carries out the reaction IMP + diphosphate = hypoxanthine + 5-phospho-alpha-D-ribose 1-diphosphate. Its pathway is purine metabolism; GMP biosynthesis via salvage pathway; GMP from guanine: step 1/1. It functions in the pathway purine metabolism; XMP biosynthesis via salvage pathway; XMP from xanthine: step 1/1. Functionally, purine salvage pathway enzyme that catalyzes the transfer of the ribosyl-5-phosphate group from 5-phospho-alpha-D-ribose 1-diphosphate (PRPP) to the N9 position of the 6-oxopurines guanine and xanthine to form the corresponding ribonucleotides GMP (guanosine 5'-monophosphate) and XMP (xanthosine 5'-monophosphate), with the release of PPi. To a lesser extent, also acts on hypoxanthine. The chain is Xanthine-guanine phosphoribosyltransferase from Vibrio campbellii (strain ATCC BAA-1116).